The chain runs to 602 residues: Wings apart-like protein homolog 1 (602 aa).

Positions 34 to 66 (NKQKRSPGQTVSKRLHKKQRVVSNPDLSLPSSP) are disordered. Over residues 54–66 (VVSNPDLSLPSSP) the composition is skewed to polar residues. The WAPL domain maps to 160–492 (IQMKSIHELR…LGLVEESHEF (333 aa)).

The protein belongs to the WAPL family.

The protein localises to the nucleus. It localises to the chromosome. Its function is as follows. Regulator of sister chromatid cohesion in mitosis which negatively regulates cohesin association with chromatin. The chain is Wings apart-like protein homolog 1 (wpl1) from Schizosaccharomyces pombe (strain 972 / ATCC 24843) (Fission yeast).